The sequence spans 256 residues: Putative ankyrin repeat protein FPV231 (256 aa).

ANK repeat units lie at residues Met-1–Ser-20, Glu-24–Ile-53, Tyr-57–Leu-86, His-90–Ile-119, and Glu-123–Ile-151.

The chain is Putative ankyrin repeat protein FPV231 from Vertebrata (FPV).